A 711-amino-acid polypeptide reads, in one-letter code: Polyribonucleotide nucleotidyltransferase (711 aa).

Mg(2+)-binding residues include Asp490 and Asp496. The KH domain maps to 556–615; it reads PRIETMQIPTDKIREVIGSGGKVIREIVEVSGAKVDINDEGIIKIASPNGEAIKKAYDMI. The 69-residue stretch at 625 to 693 folds into the S1 motif domain; it reads GMVYTGTVVK…DRGKVRLSMK (69 aa).

It belongs to the polyribonucleotide nucleotidyltransferase family. It depends on Mg(2+) as a cofactor.

It localises to the cytoplasm. It carries out the reaction RNA(n+1) + phosphate = RNA(n) + a ribonucleoside 5'-diphosphate. In terms of biological role, involved in mRNA degradation. Catalyzes the phosphorolysis of single-stranded polyribonucleotides processively in the 3'- to 5'-direction. The polypeptide is Polyribonucleotide nucleotidyltransferase (Roseobacter denitrificans (strain ATCC 33942 / OCh 114) (Erythrobacter sp. (strain OCh 114))).